The following is a 612-amino-acid chain: MDDHKPIETPDGPAVDTPGIGARRYETPPTELPITEAEAARAAGLAHNEHLKIASGYLRGGLADGLLKHATGAISEDDGQLVKFHGMYMQDDRDIRAERTKKKLEKAYSFMIRLRIAGGVVTPKQWLILDNIATTYAGSALRATTRQTFQYHGVIKSNLKRTMAAIDSALLDTIAACGDVNRNVMAATNPAQAGAHKIALQLAKDISDTLLPKTGAWREIWLDGERVVGGEDAAEVEPVYGKTYLPRKFKTVVAVPPSNEVDIFAHDLGFIAILDKKNRVTGWNVTVGGGMGMTHGETDTFPRTADVLGFVQPEDALKAAEAVMTVQRDWGNRKNRKNARLKYTIERFGLDAFRAEVEKRIGKKLGAPKPFTFDGNGDRYGWVEGDDGRHHLTLYVPSGRIKDIEGGPQFLSGLRRIAEVHEGDFRLTGNQNVIIANVPAGKRAEIDALVDEYGLTRGASALRRNSMACVALPTCGLALAESERYLPDLLSELEESLARHGLQDEPITIRSTGCPNGCARPFISEIGLVGRGPERYHLYLGAAFDGSRLSKLYREDVTASEIKGTLDPLFAAYAKDRQPGEHFGDFVIRAGFVAKTSNGPDFHERTGPLRAA.

The disordered stretch occupies residues 1-26; sequence MDDHKPIETPDGPAVDTPGIGARRYE. The [4Fe-4S] cluster site is built by C469, C475, C514, and C518. C518 contributes to the siroheme binding site.

It belongs to the nitrite and sulfite reductase 4Fe-4S domain family. In terms of assembly, alpha(8)-beta(8). The alpha component is a flavoprotein, the beta component is a hemoprotein. Siroheme serves as cofactor. [4Fe-4S] cluster is required as a cofactor.

It carries out the reaction hydrogen sulfide + 3 NADP(+) + 3 H2O = sulfite + 3 NADPH + 4 H(+). Its pathway is sulfur metabolism; hydrogen sulfide biosynthesis; hydrogen sulfide from sulfite (NADPH route): step 1/1. Its function is as follows. Component of the sulfite reductase complex that catalyzes the 6-electron reduction of sulfite to sulfide. This is one of several activities required for the biosynthesis of L-cysteine from sulfate. This Methylorubrum extorquens (strain PA1) (Methylobacterium extorquens) protein is Sulfite reductase [NADPH] hemoprotein beta-component.